Here is a 65-residue protein sequence, read N- to C-terminus: uncharacterized protein (65 aa).

The protein localises to the plastid. It is found in the chloroplast. This is an uncharacterized protein from Mesostigma viride (Green alga).